A 505-amino-acid polypeptide reads, in one-letter code: Trans-cinnamate 4-monooxygenase C4H2 (505 aa).

2 short sequence motifs (nuclear localization signal) span residues 161–168 and 247–254; these read VKKMKESN and EKRLKLFK. Cysteine 447 is a heme binding site.

It belongs to the cytochrome P450 family. The cofactor is heme.

Its subcellular location is the nucleus. It catalyses the reaction (E)-cinnamate + reduced [NADPH--hemoprotein reductase] + O2 = (E)-4-coumarate + oxidized [NADPH--hemoprotein reductase] + H2O + H(+). The protein operates within phenylpropanoid metabolism; trans-4-coumarate biosynthesis; trans-4-coumarate from trans-cinnamate: step 1/1. Functionally, component of the floral volatile benzenoid/phenylpropanoid (FVBP) biosynthetic pathway that controls carbon flux to pigments essential for pollination or UV protection, to numerous pytoalexins synthesized by plants when challenged by pathogens, and to lignins. The chain is Trans-cinnamate 4-monooxygenase C4H2 from Petunia hybrida (Petunia).